Consider the following 216-residue polypeptide: MTQQPKIPRATAKRLPIYFRYLTFLHDAGTDRISSAELSDAIKFDAATIRRDFSYFGALGKRGYGYDVKALLDFFANVLDQDSLINVALIGAGNLGQALLNFNFHQSSNMRISAAFDVDETRAGTIMAGVPIYAMSELTEQITAQRINIAILTVPQGVAQEITDKLVEAGIKGILNFTPLRVTVPNNVRVQNVDLTNELQTLVYFIDNYGSITTGL.

The segment at residues 17 to 56 (IYFRYLTFLHDAGTDRISSAELSDAIKFDAATIRRDFSYF) is a DNA-binding region (H-T-H motif). 91–96 (GAGNLG) is an NAD(+) binding site.

Belongs to the transcriptional regulatory Rex family. Homodimer.

It is found in the cytoplasm. In terms of biological role, modulates transcription in response to changes in cellular NADH/NAD(+) redox state. This chain is Redox-sensing transcriptional repressor Rex, found in Leuconostoc citreum (strain KM20).